Here is a 1407-residue protein sequence, read N- to C-terminus: MKDLLNLFNQQRQTLDFDAIKIGLASPALIRSWSFGEVKKPETINYRTFKPERDGLFCAAIFGPIKDYECLCGKYKRMKHRGVVCEKCGTEVTLAKVRRERMGCIELASPVAHIWFLKSLPSRIGLMLDMTLRDIERVLYFEAYVVTEPGLTPLERRQLLTEEQYLQARQEHADDFDASMGAEAVYELLRMIDLQSEMARLREEIVVTGSETKLKRLTKRIKLIEAFIESGNRPEWMILTVLPVLPPDLRPLVPLDGGRFATSDLNDLYRRVINRNNRLCRLLELSAPDIIVRNEKRMLQESVDALLDNGRRGRAITGTNKRPLKSLADMIKGKQGRFRQNLLGKRVDYSARSVIIVGPNLRLHQCGLPKKMALELFKPFVFAKLQRRGLATTIKGAKKLVEREEAEVWDILEEVISEHPVVLNRAPTLHRQGIQAFEPVLIEGKAIQLHPLVCTAFNADFDGDQMAVHVPLSLEAQLEARALMMSTNNILSPANGEPIIVPSQDVVLGLYYMSRALENKKGEGMVFANTSELKRAYDNSVVELHAKVKVRITEIETDDQGLRNKASSIVDTTVGRALLSEILPEGLPFVLVNTEMTKKNISRLINSSYRMLGLKETVVFADKLMYTGYAYATRAGVSICIDDMLIPIEKKEILGEAEQEVLEIQEQYQSGLVTAGERYNKVVDIWSRTNERIAKAMMDTIGTERVVNADGEIVDQKSMNSLYIMADSGARGSPQQIRQLAAMRGLMVRPDGSIIETPIKANFREGLSVQEYFNSTHGARKGLADTALKTANSGYLTRRLVDVTQDLCVVQLDCGTAGGLTMTPIVEGGDVVEPLKDRVLGRVVAEDVLLPGNDDEPIVTRSTLLDEQWVAKLEEAGVQSVKVRSPITCESPFGVCALCYGRDLARGHLVNMGEAVGVIAAQSIGEPGTQLTMRTFHIGGTALSAAAIDNITVKTSGSVKFTNLKYVEHANGTLVAVSRSGEISVLDTHGRERERYKLPYGATINVKDMAEVKSGQILANWDPHNHPIVSEVAGFVRFIDFVDGVTVIEKTDDLTGLSSREIADLKRRGSQGKDLRPLVRIVDKKGNDLTIPGTDLSAQYLLPPRSIVNLQDGAPVGIGDVVAKIPQEASKTRDITGGLPRVADLFEARRPKDPAILAERSGVISFGKDTKGKQRLIIKDADGSEHEELIPKYRQIIVFEGEHVTKGETIVDGEPSPQDILRLLGIEPLAAYLVKEIQDVYRLQGVKINDKHIEVITRQMLRKVEIVDQGNSKFLNGEQVERQRVIDENAKLIARNELPAKYNPVLLGITKASLATESFISAASFQETTRVLTEAAVRGTRDNLRGLKENVIVGRLIPAGTGQTYHSQRRYSSVGLTESEMETLVGRSTSSGTEVTSPSKDAIPLGG.

4 residues coordinate Zn(2+): cysteine 70, cysteine 72, cysteine 85, and cysteine 88. Mg(2+)-binding residues include aspartate 460, aspartate 462, and aspartate 464. Residues cysteine 814, cysteine 889, cysteine 896, and cysteine 899 each contribute to the Zn(2+) site. Positions leucine 1384 to glycine 1407 are disordered. Over residues glycine 1386–serine 1399 the composition is skewed to polar residues.

It belongs to the RNA polymerase beta' chain family. The RNAP catalytic core consists of 2 alpha, 1 beta, 1 beta' and 1 omega subunit. When a sigma factor is associated with the core the holoenzyme is formed, which can initiate transcription. Mg(2+) is required as a cofactor. Requires Zn(2+) as cofactor.

The enzyme catalyses RNA(n) + a ribonucleoside 5'-triphosphate = RNA(n+1) + diphosphate. Functionally, DNA-dependent RNA polymerase catalyzes the transcription of DNA into RNA using the four ribonucleoside triphosphates as substrates. This Xylella fastidiosa (strain Temecula1 / ATCC 700964) protein is DNA-directed RNA polymerase subunit beta'.